We begin with the raw amino-acid sequence, 68 residues long: Dermaseptin-H5 (68 aa).

Residues 1–17 (KSLFLVLFLGMVSLSIC) form the signal peptide. Residues 18–38 (EEEKRENEDEEKQEDDEQSEM) constitute a propeptide that is removed on maturation. The interval 19 to 40 (EEKRENEDEEKQEDDEQSEMKR) is disordered. Over residues 25-35 (EDEEKQEDDEQ) the composition is skewed to acidic residues. Residue Leu65 is modified to Leucine amide. A propeptide spanning residues 67–68 (EQ) is cleaved from the precursor.

In terms of tissue distribution, expressed by the skin glands.

It is found in the secreted. Functionally, has antibacterial activity against the Gram-negative bacteria E.coli ATCC 11775 (MIC=0.5 uM), and the Gram-positive bacteria S.aureus ATCC 12600 (MIC=0.5 uM) and M.luteus ATCC 49732 (MIC=2.0 uM). Does not inhibit the growth of the fungus C.albicans. Probably acts by disturbing membrane functions with its amphipathic structure. This is Dermaseptin-H5 from Pithecopus azureus (Orange-legged monkey tree frog).